We begin with the raw amino-acid sequence, 94 residues long: Small ribosomal subunit protein uS19 (94 aa).

Belongs to the universal ribosomal protein uS19 family.

Protein S19 forms a complex with S13 that binds strongly to the 16S ribosomal RNA. The protein is Small ribosomal subunit protein uS19 (rpsS) of Lactobacillus acidophilus (strain ATCC 700396 / NCK56 / N2 / NCFM).